The sequence spans 336 residues: Foldase protein PrsA (336 aa).

The signal sequence occupies residues 1 to 22; that stretch reads MKSAKKLLSVLCLGIFILTFTA. C23 carries the N-palmitoyl cysteine lipid modification. A lipid anchor (S-diacylglycerol cysteine) is attached at C23. A PpiC domain is found at 194–286; sequence PNTMNVSHIL…WGYHIIKVNS (93 aa).

This sequence belongs to the PrsA family.

The protein localises to the cell membrane. The catalysed reaction is [protein]-peptidylproline (omega=180) = [protein]-peptidylproline (omega=0). In terms of biological role, plays a major role in protein secretion by helping the post-translocational extracellular folding of several secreted proteins. This chain is Foldase protein PrsA, found in Clostridium botulinum (strain ATCC 19397 / Type A).